The following is a 654-amino-acid chain: Amyloid beta precursor like protein 1 (654 aa).

Positions 1-38 (MGPTSPAARGQGRRWRPPPLPLLLPLSLLLLRAQLAVG) are cleaved as a signal peptide. Residues 39-584 (NLAVGSPSAA…APSGTGVSRE (546 aa)) lie on the Extracellular side of the membrane. Residues 50–146 (APGSAQVAGL…PFHCLPGEFV (97 aa)) are GFLD subdomain. Residues 50–212 (APGSAQVAGL…RGVEYVCCPP (163 aa)) enclose the E1 domain. 6 cysteine pairs are disulfide-bonded: cysteine 60/cysteine 84, cysteine 95/cysteine 140, cysteine 120/cysteine 128, cysteine 156/cysteine 210, cysteine 167/cysteine 197, and cysteine 181/cysteine 209. The cuBD subdomain stretch occupies residues 154–212 (EGCRFLHQERMDQCESSTRRHQEAQEACSSQGLILHGSGMLLPCGSDRFRGVEYVCCPP). Histidine 174 is a binding site for Cu(2+). 3 residues coordinate Zn(2+): glutamate 206, cysteine 209, and cysteine 210. Positions 214–297 (ATPNPSGMAA…VTPTPRPTDG (84 aa)) are disordered. Residues 262 to 272 (QAEEEEEEEEE) are compositionally biased toward acidic residues. The E2 domain maps to 297 to 488 (GVDVYFGMPG…QELRPQIQEL (192 aa)). 2 heparin-binding regions span residues 314–346 (FLRAKMDLEERRMRQINEVMREWAMADSQSKNL) and 414–445 (LMALRRYLRAEQKEQRHTLRHYQHVAAVDPEK). Residues 446-463 (AQQMRFQVQTHLQVIEER) form a collagen-binding region. Asparagine 465 carries an N-linked (GlcNAc...) asparagine glycan. Positions 497–580 (SELDASVPGS…RDELAPSGTG (84 aa)) are disordered. Residues 508–523 (SEDKGSLQPPESKDDP) are compositionally biased toward basic and acidic residues. The span at 529-539 (KGSTDQESSSS) shows a compositional bias: polar residues. Residue asparagine 555 is glycosylated (N-linked (GlcNAc...) asparagine). Position 565 (histidine 565) interacts with Cu(2+). Residue histidine 565 coordinates Zn(2+). A helical transmembrane segment spans residues 585–607 (ALSGLLIMGAGGGSLIVLSLLLL). The Basolateral sorting signal motif lies at 608–619 (RKKKPYGTISHG). Topologically, residues 608–654 (RKKKPYGTISHGVVEVDPMLTLEEQQLRELQRHGYENPTYRFLEERP) are cytoplasmic. The interaction with DAB1 stretch occupies residues 636 to 652 (ELQRHGYENPTYRFLEE). The tract at residues 640–654 (HGYENPTYRFLEERP) is interaction with DAB2. The short motif at 644-647 (NPTY) is the NPXY motif; contains endocytosis signal element.

Belongs to the APP family. In terms of assembly, monomer and homodimer. Heparin binding promotes homodimerization. Binds, via its C-terminus, to the PID domain of several cytoplasmic proteins, including APBB and APBA family members, MAPK8IP1 and DAB1. Binding to Dab1 inhibits its serine phosphorylation. Interacts with CPEB1. Interacts (via NPXY motif) with DAB2 (via PID domain); the interaction is impaired by tyrosine phosphorylation of the NPXY motif. Interacts (via NPXY motif) with DAB1. In terms of processing, proteolytically cleaved by caspases during neuronal apoptosis. Cleaved, in vitro, at Asp-624 by caspase-3. Post-translationally, N- and O-glycosylated.

Its subcellular location is the cell membrane. The protein localises to the cytoplasm. May play a role in postsynaptic function. The C-terminal gamma-secretase processed fragment, ALID1, activates transcription activation through APBB1 (Fe65) binding. Couples to JIP signal transduction through C-terminal binding. May interact with cellular G-protein signaling pathways. Can regulate neurite outgrowth through binding to components of the extracellular matrix such as heparin and collagen I. Its function is as follows. The gamma-CTF peptide, C30, is a potent enhancer of neuronal apoptosis. The polypeptide is Amyloid beta precursor like protein 1 (Aplp1) (Mus musculus (Mouse)).